Here is a 933-residue protein sequence, read N- to C-terminus: Myocardin (933 aa).

The short motif at 12-27 (IRSKFRSVLQLRLQQR) is the MEF2C-binding element. RPEL repeat units follow at residues 18 to 43 (SVLQLRLQQRRTQEQLANEGIIPPLR), 62 to 87 (DTLKHKVRNRSDRGNVVKMHILQASS), and 106 to 131 (DDLNEKIALRPGPLELVEKNILPVDC). Positions 153 to 205 (FEEDSSSDGLSPDQTRSEDLPGSAGSPLDTKAAETPLAGPRGTVQDLTLGSEN) are HDAC5-binding. Disordered regions lie at residues 154 to 282 (EEDS…PPPM) and 324 to 365 (NEQM…GPLP). Positions 210-220 (SAPQSGNQSDL) are enriched in polar residues. The segment covering 248 to 265 (NRHKKPKDPKPKVKKLKY) has biased composition (basic residues). The segment covering 330–346 (NPNSSSAPLSSTPLSPA) has biased composition (low complexity). Over residues 347–357 (KNSFSGQTGVS) the composition is skewed to polar residues. The SAP domain occupies 368–402 (LDDLKVSELRQQLRIRGLPVSGTKTALMDRLRPFQ). Serine 445, serine 449, serine 453, and serine 457 each carry phosphoserine; by GSK3-beta. A coiled-coil region spans residues 515–550 (LVEKQKVINELTWKLQQEQRQVEELRMQLQKQKRGT). Residues 568–613 (DAGSSCPFAPLPRAVKRQSNSSEEQPAAGDAARLRPLGNTHCAESS) form a disordered region. Residues serine 621, serine 625, serine 629, and serine 633 each carry the phosphoserine; by GSK3-beta modification. 2 disordered regions span residues 630 to 672 (PQHS…VSSP) and 760 to 794 (PKIPGSSRSPTAALPKPSATFDQASSGGQLAFDHY). The interval 712–933 (ITQPPSYEDA…SPMDLHLQQW (222 aa)) is required for interaction with and ubiquitination by STUB1. Residues serine 810, serine 857, and serine 864 each carry the phosphoserine; by MAPK1 and MAPK3 modification. Residue threonine 891 is modified to Phosphothreonine; by MAPK1 and MAPK3.

As to quaternary structure, homodimer. Interacts with MLLT7/FOXO4. Interacts with SRF, its association does not depend on specific DNA sequences for ternary complex formation. Interacts (via C-terminal) with EP300 (via the CREB-binding domain). Interacts with HDAC4 and HDAC5. Interacts with MEF2C. Interacts (via C-terminus) with STUB1/CHIP. Interacts with PURB. In terms of processing, ubiquitinated; by STUB1/CHIP at the C-terminus, leading to its degradation by the proteasome. Phosphorylation by GSK3B is required for STUB1/CHIP-mediated ubiquitination. Phosphorylation negatively regulates the intrinsic myocardin transcriptional activity. Phosphorylated; by GSK3B. As to expression, expressed in the heart and in smooth muscle cells-containing tissues (aorta, pulmonary vein, lung), but is not detectable in skeletal muscle, liver, kidney and spleen.

The protein localises to the nucleus. Functionally, smooth muscle cells (SM) and cardiac muscle cells-specific transcriptional factor which uses the canonical single or multiple CArG boxes DNA sequence. Acts as a cofactor of serum response factor (SRF) with the potential to modulate SRF-target genes. Plays a crucial role in cardiogenesis, urinary bladder development, and differentiation of the smooth muscle cell lineage (myogenesis). Positively regulates the transcription of genes involved in vascular smooth muscle contraction. The sequence is that of Myocardin (MYOCD) from Sus scrofa (Pig).